The sequence spans 32 residues: C-reactive protein (32 aa).

The Pentraxin (PTX) domain occupies 2–32 (VIKTLVFQSESNNSFVELIPMKPLNLRAFXL).

This sequence belongs to the pentraxin family. In terms of assembly, homopentamer. Pentraxin (or pentaxin) have a discoid arrangement of 5 non-covalently bound subunits. Post-translationally, glycosylated.

It is found in the secreted. Functionally, displays several functions associated with host defense: it promotes agglutination, bacterial capsular swelling, phagocytosis, and complement fixation through its calcium-dependent binding to phosphorylcholine. In Pleuronectes platessa (European plaice), this protein is C-reactive protein.